A 545-amino-acid chain; its full sequence is Vicilin Pis v 3.0101 (545 aa).

The N-terminal stretch at 1–25 (MGSRTKFCLTLFLVSVLILCAGLAL) is a signal peptide. Disordered stretches follow at residues 62-93 (KEKKGREQEEEEEEEWGSGRGRGDEFSTHEPG) and 129-154 (REHSYSRDEEEEEEGDEEQEEEDENP). The segment covering 82 to 93 (GRGDEFSTHEPG) has biased composition (basic and acidic residues). Positions 136–153 (DEEEEEEGDEEQEEEDEN) are enriched in acidic residues. The region spanning 354-517 (TFNLFKKDPS…LAFKTKGEEV (164 aa)) is the Cupin type-1 2 domain.

It belongs to the 7S seed storage protein family. In terms of tissue distribution, expressed in seed.

Its function is as follows. Seed storage protein. The chain is Vicilin Pis v 3.0101 from Pistacia vera (Pistachio).